Reading from the N-terminus, the 796-residue chain is Cadherin-11 (796 aa).

A signal peptide spans 1–24; it reads MKENYCLQAALVCLSMLYHSQAFA. Positions 25-53 are excised as a propeptide; that stretch reads LERRSHLHPSFHGHHEKGKEGQVLQRSKR. Cadherin domains follow at residues 54–159, 160–268, 269–383, 384–486, and 487–612; these read GWVW…PPEF, LHEI…PPKF, PQSV…PPMF, LAPS…DNAP, and KFAA…YILN. Residues 54–617 are Extracellular-facing; it reads GWVWNQFFVI…AYILNAGLST (564 aa). 2 N-linked (GlcNAc...) asparagine glycosylation sites follow: Asn455 and Asn540. Residues 618 to 640 traverse the membrane as a helical segment; it reads GALIAILACIVILLVIVVLFVTL. Topologically, residues 641–796 are cytoplasmic; it reads RRQKKEPLIV…GSKDTFDDDS (156 aa). Ser788 carries the phosphoserine modification. A Phosphothreonine modification is found at Thr791.

In terms of assembly, interacts with PCDH8. Selectively expressed in osteoblastic cell lines, precursor cell lines of osteoblasts, and primary osteoblastic cells from calvaria, as well as in lung, testis, and brain tissues at low levels.

It localises to the cell membrane. Cadherins are calcium-dependent cell adhesion proteins. They preferentially interact with themselves in a homophilic manner in connecting cells; cadherins may thus contribute to the sorting of heterogeneous cell types. Required for proper focal adhesion assembly. Involved in the regulation of cell migration. This chain is Cadherin-11 (Cdh11), found in Mus musculus (Mouse).